Here is a 230-residue protein sequence, read N- to C-terminus: Large ribosomal subunit protein uL1 (230 aa).

It belongs to the universal ribosomal protein uL1 family. In terms of assembly, part of the 50S ribosomal subunit.

Its function is as follows. Binds directly to 23S rRNA. The L1 stalk is quite mobile in the ribosome, and is involved in E site tRNA release. In terms of biological role, protein L1 is also a translational repressor protein, it controls the translation of the L11 operon by binding to its mRNA. The sequence is that of Large ribosomal subunit protein uL1 from Ruminiclostridium cellulolyticum (strain ATCC 35319 / DSM 5812 / JCM 6584 / H10) (Clostridium cellulolyticum).